The primary structure comprises 194 residues: MYQNHKNEILLATPLIKDDIVFTKSVVYLCQNDRHGAMGLIINKPLADTLKDVFEELHIPHTNTFKEILEYPLYMGGPISPHKIMILHTTNGRNYTSTIKLDEGLAITASIDILEDIANNILPEYFLPVVGYSCWTANQLTDEIKSNDWIVTNKLNKKILFNHENKVKWQNHLEHAGYTLQSLDTLFNRNTGNC.

The protein belongs to the UPF0301 (AlgH) family.

The polypeptide is UPF0301 protein FTM_0963 (Francisella tularensis subsp. mediasiatica (strain FSC147)).